A 29-amino-acid chain; its full sequence is NAD-reducing hydrogenase HoxS subunit delta (29 aa).

Basic and acidic residues predominate over residues 1 to 11 (MKHSEKNEIAS). The segment at 1–29 (MKHSEKNEIASHELPTTPLDPVLAAGRES) is disordered.

Belongs to the [NiFe]/[NiFeSe] hydrogenase small subunit family. As to quaternary structure, tetramer of an alpha and a gamma subunits (flavin-containing dimer), and a delta and a nickel-containing beta subunits (hydrogenase dimer). Requires [4Fe-4S] cluster as cofactor. [3Fe-4S] cluster is required as a cofactor. It depends on [2Fe-2S] cluster as a cofactor. The cofactor is FMN. Ni(2+) serves as cofactor.

The protein resides in the cytoplasm. It catalyses the reaction H2 + NAD(+) = NADH + H(+). The polypeptide is NAD-reducing hydrogenase HoxS subunit delta (hoxY) (Rhodococcus opacus (Nocardia opaca)).